We begin with the raw amino-acid sequence, 111 residues long: Nascent polypeptide-associated complex protein (111 aa).

Residues Gly-3–Ser-72 form the NAC-A/B domain.

Belongs to the NAC-alpha family. In terms of assembly, homodimer. Interacts with the ribosome. Binds ribosomal RNA.

In terms of biological role, contacts the emerging nascent chain on the ribosome. In Thermococcus kodakarensis (strain ATCC BAA-918 / JCM 12380 / KOD1) (Pyrococcus kodakaraensis (strain KOD1)), this protein is Nascent polypeptide-associated complex protein.